The following is a 419-amino-acid chain: 3-isopropylmalate dehydratase large subunit (419 aa).

Residues Cys-300, Cys-360, and Cys-363 each contribute to the [4Fe-4S] cluster site.

It belongs to the aconitase/IPM isomerase family. LeuC type 2 subfamily. As to quaternary structure, heterodimer of LeuC and LeuD. Requires [4Fe-4S] cluster as cofactor.

The catalysed reaction is (2R,3S)-3-isopropylmalate = (2S)-2-isopropylmalate. It participates in amino-acid biosynthesis; L-leucine biosynthesis; L-leucine from 3-methyl-2-oxobutanoate: step 2/4. Functionally, catalyzes the isomerization between 2-isopropylmalate and 3-isopropylmalate, via the formation of 2-isopropylmaleate. This is 3-isopropylmalate dehydratase large subunit from Desulfatibacillum aliphaticivorans.